The primary structure comprises 198 residues: Recombination protein RecR (198 aa).

The C4-type zinc-finger motif lies at 57–72; that stretch reads CSVCGNITDEDPCEIC. The 96-residue stretch at 80 to 175 folds into the Toprim domain; the sequence is EMILVVEQPK…KVTRLAHGLA (96 aa).

It belongs to the RecR family.

Functionally, may play a role in DNA repair. It seems to be involved in an RecBC-independent recombinational process of DNA repair. It may act with RecF and RecO. The protein is Recombination protein RecR of Latilactobacillus sakei subsp. sakei (strain 23K) (Lactobacillus sakei subsp. sakei).